Consider the following 187-residue polypeptide: GTP cyclohydrolase 1 (187 aa).

Zn(2+)-binding residues include C78, H81, and C149.

This sequence belongs to the GTP cyclohydrolase I family. Toroid-shaped homodecamer, composed of two pentamers of five dimers.

The enzyme catalyses GTP + H2O = 7,8-dihydroneopterin 3'-triphosphate + formate + H(+). It functions in the pathway cofactor biosynthesis; 7,8-dihydroneopterin triphosphate biosynthesis; 7,8-dihydroneopterin triphosphate from GTP: step 1/1. This chain is GTP cyclohydrolase 1, found in Wolinella succinogenes (strain ATCC 29543 / DSM 1740 / CCUG 13145 / JCM 31913 / LMG 7466 / NCTC 11488 / FDC 602W) (Vibrio succinogenes).